The sequence spans 781 residues: Arf-GAP with coiled-coil, ANK repeat and PH domain-containing protein 2 (781 aa).

The BAR domain occupies 1 to 226; that stretch reads MKVTVDFEEC…MKDLGAQLDQ (226 aa). Residues 266–361 enclose the PH domain; it reads GIVMEGYLFK…WIKAVQTSIA (96 aa). The segment covering 365 to 378 has biased composition (basic and acidic residues); the sequence is REKGDESEKQEKKS. A disordered region spans residues 365-390; sequence REKGDESEKQEKKSSPSTGSLESGSE. A compositionally biased stretch (low complexity) spans 379 to 388; sequence SPSTGSLESG. Residues 399 to 521 form the Arf-GAP domain; that stretch reads ESALQRVQCI…KFVEKQPAAA (123 aa). A C4-type zinc finger spans residues 414–437; that stretch reads CCDCGLADPRWASINLGITLCIEC. The segment at 520–576 is disordered; that stretch reads AAVSPLESRTKVLPQSQEEKRHSAPEKSFLAIEQGAASPRVRSSDSGIQQSVDDSRE. ANK repeat units follow at residues 642–671, 675–704, and 708–737; these read NKAT…NVNI, KGRG…NQHA, and DGKD…NEEM.

It is found in the endosome membrane. The protein localises to the cell membrane. Its activity is regulated as follows. GAP activity stimulated by phosphatidylinositol 4,5-bisphosphate (PIP2) and phosphatidic acid. GTPase-activating protein (GAP) for ADP ribosylation factor 6 (ARF6). The polypeptide is Arf-GAP with coiled-coil, ANK repeat and PH domain-containing protein 2 (ACAP2) (Gallus gallus (Chicken)).